A 503-amino-acid chain; its full sequence is MRTINKILDKIGKVQKGKSLLWQLYPLLFREDLYAIAYNRSSSELSLKSMKHRDSSDRYSLVIIKRLINRIRNQTTSKLLFQGSDRKNLKINRSLFEGLTVLFEMIIPVESRPLVQYQSEWNSLQSIHSIFLFMEDRFFYSNSILGLKIPYYFHPEMIIRLFRRRIKDVFLLHLVRLLFHNYQNPFVPETSLFYSLKDSQKRLSILLRNHYFYEFENQLVPLWKRFVQLQSLSHRFLMDQTNPLYKMKHGLGSLQPFLSEINLLETPCIHYVRYENHSIIAFKGTKSIVNKWIKYLVGFWQYNYHYWLQPCQIDIRRPSRRCFSFMGYILGFRSRMIKVHTKRIDESSTTHCIIKEFCASIPTSSLIESLTREGFCDSSGRPVGRSTWTILKDDDILNKYHQIWGDLSCYYSGSFSRDGLWRAKYILQLSCAKTLAQKHKSTTRVVRNHFGLKFITTLNSVKNPFFIGSQEYSHRKNFWCLDIIRMNSLVNLINMKKESLSSS.

This sequence belongs to the intron maturase 2 family. MatK subfamily.

Its subcellular location is the plastid. The protein resides in the chloroplast. Usually encoded in the trnK tRNA gene intron. Probably assists in splicing its own and other chloroplast group II introns. This chain is Maturase K, found in Psilotum nudum (Whisk fern).